A 132-amino-acid polypeptide reads, in one-letter code: Fatty acid-binding protein, brain (132 aa).

At valine 2 the chain carries N-acetylvaline. 127–129 (RHY) lines the a fatty acid pocket.

This sequence belongs to the calycin superfamily. Fatty-acid binding protein (FABP) family. Expressed in brain and other neural tissues.

Its subcellular location is the cytoplasm. In terms of biological role, B-FABP could be involved in the transport of a so far unknown hydrophobic ligand with potential morphogenic activity during CNS development. It is required for the establishment of the radial glial fiber system in developing brain, a system that is necessary for the migration of immature neurons to establish cortical layers. The sequence is that of Fatty acid-binding protein, brain (FABP7) from Homo sapiens (Human).